Here is a 122-residue protein sequence, read N- to C-terminus: Large ribosomal subunit protein uL14 (122 aa).

The protein belongs to the universal ribosomal protein uL14 family. Part of the 50S ribosomal subunit. Forms a cluster with proteins L3 and L19. In the 70S ribosome, L14 and L19 interact and together make contacts with the 16S rRNA in bridges B5 and B8.

Its function is as follows. Binds to 23S rRNA. Forms part of two intersubunit bridges in the 70S ribosome. This Lacticaseibacillus casei (strain BL23) (Lactobacillus casei) protein is Large ribosomal subunit protein uL14.